The primary structure comprises 446 residues: N-succinylarginine dihydrolase (446 aa).

Substrate is bound by residues 19-28 (AGLSFGNVAS), Asn-110, and 137-138 (HR). Glu-174 is an active-site residue. Arg-213 provides a ligand contact to substrate. His-249 is a catalytic residue. Asp-251 and Asn-364 together coordinate substrate. The Nucleophile role is filled by Cys-370.

It belongs to the succinylarginine dihydrolase family. Homodimer.

The catalysed reaction is N(2)-succinyl-L-arginine + 2 H2O + 2 H(+) = N(2)-succinyl-L-ornithine + 2 NH4(+) + CO2. Its pathway is amino-acid degradation; L-arginine degradation via AST pathway; L-glutamate and succinate from L-arginine: step 2/5. Catalyzes the hydrolysis of N(2)-succinylarginine into N(2)-succinylornithine, ammonia and CO(2). The polypeptide is N-succinylarginine dihydrolase (Burkholderia thailandensis (strain ATCC 700388 / DSM 13276 / CCUG 48851 / CIP 106301 / E264)).